Consider the following 553-residue polypeptide: CTP synthase (553 aa).

The amidoligase domain stretch occupies residues 1-270 (MTKYVFVTGG…DELICEELKL (270 aa)). Serine 13 lines the CTP pocket. Serine 13 contacts UTP. Residues 14-19 (SLGKGI) and aspartate 71 each bind ATP. Mg(2+) is bound by residues aspartate 71 and glutamate 144. CTP-binding positions include 151-153 (DIE), 191-196 (KTKPTQ), and lysine 227. UTP-binding positions include 191–196 (KTKPTQ) and lysine 227. Residues 295-547 (TIGMVGKYVE…VEAARAHHEA (253 aa)) form the Glutamine amidotransferase type-1 domain. An L-glutamine-binding site is contributed by glycine 356. The Nucleophile; for glutamine hydrolysis role is filled by cysteine 383. L-glutamine-binding positions include 384–387 (LGMQ), glutamate 407, and arginine 473. Residues histidine 520 and glutamate 522 contribute to the active site.

The protein belongs to the CTP synthase family. In terms of assembly, homotetramer.

It catalyses the reaction UTP + L-glutamine + ATP + H2O = CTP + L-glutamate + ADP + phosphate + 2 H(+). The catalysed reaction is L-glutamine + H2O = L-glutamate + NH4(+). The enzyme catalyses UTP + NH4(+) + ATP = CTP + ADP + phosphate + 2 H(+). It participates in pyrimidine metabolism; CTP biosynthesis via de novo pathway; CTP from UDP: step 2/2. Its activity is regulated as follows. Allosterically activated by GTP, when glutamine is the substrate; GTP has no effect on the reaction when ammonia is the substrate. The allosteric effector GTP functions by stabilizing the protein conformation that binds the tetrahedral intermediate(s) formed during glutamine hydrolysis. Inhibited by the product CTP, via allosteric rather than competitive inhibition. In terms of biological role, catalyzes the ATP-dependent amination of UTP to CTP with either L-glutamine or ammonia as the source of nitrogen. Regulates intracellular CTP levels through interactions with the four ribonucleotide triphosphates. The sequence is that of CTP synthase from Paraburkholderia phymatum (strain DSM 17167 / CIP 108236 / LMG 21445 / STM815) (Burkholderia phymatum).